A 365-amino-acid chain; its full sequence is Chorismate synthase (365 aa).

NADP(+) contacts are provided by arginine 48 and arginine 54. FMN contacts are provided by residues 125–127 (RSS), 237–238 (NA), glycine 277, 292–296 (KPTSS), and arginine 318.

Belongs to the chorismate synthase family. In terms of assembly, homotetramer. Requires FMNH2 as cofactor.

It catalyses the reaction 5-O-(1-carboxyvinyl)-3-phosphoshikimate = chorismate + phosphate. The protein operates within metabolic intermediate biosynthesis; chorismate biosynthesis; chorismate from D-erythrose 4-phosphate and phosphoenolpyruvate: step 7/7. In terms of biological role, catalyzes the anti-1,4-elimination of the C-3 phosphate and the C-6 proR hydrogen from 5-enolpyruvylshikimate-3-phosphate (EPSP) to yield chorismate, which is the branch point compound that serves as the starting substrate for the three terminal pathways of aromatic amino acid biosynthesis. This reaction introduces a second double bond into the aromatic ring system. The chain is Chorismate synthase from Verminephrobacter eiseniae (strain EF01-2).